The following is a 398-amino-acid chain: Immunoglobulin heavy constant alpha 1 (398 aa).

Over 1 to 364 the chain is Extracellular; sequence ASPTSPKVFP…TPGANLWPTT (364 aa). Residues 6–98 form the Ig-like 1 domain; the sequence is PKVFPLSLCS…HYTNPSQDVT (93 aa). 2 disulfides stabilise this stretch: Cys26/Cys85 and Cys77/Cys101. The segment at 96 to 122 is disordered; it reads DVTVPCPVPSTPPTPSPSTPPTPSPSC. Residues 101-119 are compositionally biased toward pro residues; sequence CPVPSTPPTPSPSTPPTPS. The O-linked (GalNAc...) serine glycan is linked to Ser105. O-linked (GalNAc...) threonine glycosylation is found at Thr106 and Thr109. O-linked (GalNAc...) serine glycosylation is found at Ser111 and Ser113. O-linked (GalNAc...) threonine glycosylation is found at Thr114 and Thr117. Residues Ser119 and Ser121 are each glycosylated (O-linked (GalNAc...) serine). 3 cysteine pairs are disulfide-bonded: Cys123–Cys180, Cys147–Cys204, and Cys250–Cys313. Ig-like domains lie at 125 to 220 and 228 to 330; these read PRLS…ATLS and PEVH…KTID. N-linked (GlcNAc...) (complex) asparagine glycosylation is present at Asn144. An N-linked (GlcNAc...) (complex) asparagine glycan is attached at Pro340. Glu352 serves as a coordination point for 3-hydroxy-L-kynurenine. A helical membrane pass occupies residues 365–383; sequence ITFLTLFLLSLFYSTALTV. The Cytoplasmic portion of the chain corresponds to 384-398; that stretch reads TSVRGPSGNREGPQY.

Immunoglobulins are composed of two identical heavy chains and two identical light chains; disulfide-linked. Monomeric or polymeric. Part of the secretory IgA (sIgA) complex that consists of two, four or five IgA monomers, and two additional non-Ig polypeptides, namely the JCHAIN and the secretory component (the proteolytic product of PIGR). 3-Hydroxykynurenine, an oxidized tryptophan metabolite that is common in biological fluids, reacts with alpha-1-microglobulin to form heterogeneous polycyclic chromophores including hydroxanthommatin. The chromophore reacts with accessible cysteines forming non-reducible thioether cross-links with Ig alpha-1 chain C region Cys-352. Post-translationally, N- and O-glycosylated. N-glycan at Asn-144: Hex5HexNAc4.

It localises to the secreted. It is found in the cell membrane. In terms of biological role, constant region of immunoglobulin heavy chains. Immunoglobulins, also known as antibodies, are membrane-bound or secreted glycoproteins produced by B lymphocytes. In the recognition phase of humoral immunity, the membrane-bound immunoglobulins serve as receptors which, upon binding of a specific antigen, trigger the clonal expansion and differentiation of B lymphocytes into immunoglobulins-secreting plasma cells. Secreted immunoglobulins mediate the effector phase of humoral immunity, which results in the elimination of bound antigens. The antigen binding site is formed by the variable domain of one heavy chain, together with that of its associated light chain. Thus, each immunoglobulin has two antigen binding sites with remarkable affinity for a particular antigen. The variable domains are assembled by a process called V-(D)-J rearrangement and can then be subjected to somatic hypermutations which, after exposure to antigen and selection, allow affinity maturation for a particular antigen. Ig alpha is the major immunoglobulin class in body secretions. The polypeptide is Immunoglobulin heavy constant alpha 1 (Homo sapiens (Human)).